The primary structure comprises 340 residues: Mitotic checkpoint protein BUB3.1 (340 aa).

The disordered stretch occupies residues 1 to 20 (MTTVTPSAGRELSNPPSDGI). WD repeat units follow at residues 15–54 (PPSD…LKGE), 96–135 (THDK…GPER), 142–179 (LQPE…QPEQ), 239–278 (DIVY…RLYQ), and 281–324 (KYPT…RSVN).

The protein belongs to the WD repeat BUB3 family. As to quaternary structure, part of the mitotic checkpoint complex (MCC); interacts with CDC20-1 and CDC20-2. Interacts with MAD2 and BUBR1. Expressed in actively dividing tissues, early in organ development, in young leaves, lateral root primordia and root meristems, flower buds, flowers and siliques.

It is found in the nucleus. It localises to the chromosome. The protein resides in the centromere. Its subcellular location is the kinetochore. The protein localises to the cytoplasm. It is found in the cytoskeleton. It localises to the phragmoplast. The protein resides in the spindle. Has a dual function in spindle-assembly checkpoint signaling and in promoting the establishment of correct kinetochore-microtubule (K-MT) attachments. Promotes the formation of stable end-on bipolar attachments. Necessary for kinetochore localization of BUB1. The BUB1/BUB3 complex plays a role in the inhibition of anaphase-promoting complex or cyclosome (APC/C) when spindle-assembly checkpoint is activated and inhibits the ubiquitin ligase activity of APC/C by phosphorylating its activator CDC20. Essential for gametophyte development. The protein is Mitotic checkpoint protein BUB3.1 (BUB3.1) of Arabidopsis thaliana (Mouse-ear cress).